We begin with the raw amino-acid sequence, 433 residues long: Pyrimidine-nucleoside phosphorylase (433 aa).

Residue 81–83 (KHS) coordinates phosphate. Positions 88 and 90 each coordinate K(+). Residues Thr-92, 108-110 (KMS), and Thr-120 contribute to the phosphate site. 2 residues coordinate substrate: Arg-168 and Lys-187. Residues Leu-243, Ala-246, and Glu-255 each coordinate K(+).

Belongs to the thymidine/pyrimidine-nucleoside phosphorylase family. Homodimer. K(+) serves as cofactor.

The enzyme catalyses uridine + phosphate = alpha-D-ribose 1-phosphate + uracil. It carries out the reaction thymidine + phosphate = 2-deoxy-alpha-D-ribose 1-phosphate + thymine. It catalyses the reaction 2'-deoxyuridine + phosphate = 2-deoxy-alpha-D-ribose 1-phosphate + uracil. Functionally, catalyzes phosphorolysis of the pyrimidine nucleosides uridine, thymidine and 2'-deoxyuridine with the formation of the corresponding pyrimidine base and ribose-1-phosphate. This Staphylococcus aureus (strain Mu50 / ATCC 700699) protein is Pyrimidine-nucleoside phosphorylase (pdp).